Reading from the N-terminus, the 83-residue chain is Protein L83L (83 aa).

The segment covering methionine 1–glycine 10 has biased composition (polar residues). Residues methionine 1–glutamate 25 are disordered. Residues alanine 14–glutamate 25 show a composition bias toward basic and acidic residues.

It belongs to the asfivirus L83L family. Interacts with host IL1B.

Its subcellular location is the host cytoplasm. Functionally, may subvert the host innate immune response by interacting with host IL1B and interfering with its function. This chain is Protein L83L, found in Ornithodoros (relapsing fever ticks).